The primary structure comprises 402 residues: MEKWHNPSSPKRLRGDTPNSWSELPLDLLTAVFERLSYANFQRAKSVCSSWHSGSRQSVPIQIPWLILFPEYDNNNSCTLFNPEEKGQVYKMKDLGVEFSKSVCTATYGSWLLMRDPLYNLYILNLFTHERVNLPPFESQLGMVKIERTIYDWFHSTLHYNGKEYHKRIRILSTVFWIDEKTKDYVVIWGLGSSCVVYSKKGDKCWNQIPETSNCHHMVYKDHKLYFSTSTYKYEFRIFDFSREIPQQIFQGYVIMQGLTLNRHRGQPGYPFATIDTKLVVTVTGDVLKVDRIVEKETRICRFFYVYKVYSSGSYKKYEKVESLGDEAILLDLGITMLANDTVGLLGNSIYFSGTHTKSKVINDTFIFSLETQKMDPVHKFDCSSAQLSSARWFLPSSHKLD.

In terms of domain architecture, F-box spans 18 to 64; it reads PNSWSELPLDLLTAVFERLSYANFQRAKSVCSSWHSGSRQSVPIQIP.

In Arabidopsis thaliana (Mouse-ear cress), this protein is Putative F-box protein At4g22180.